The sequence spans 75 residues: Large ribosomal subunit protein uL29 (75 aa).

This sequence belongs to the universal ribosomal protein uL29 family.

The chain is Large ribosomal subunit protein uL29 from Pyrobaculum aerophilum (strain ATCC 51768 / DSM 7523 / JCM 9630 / CIP 104966 / NBRC 100827 / IM2).